Reading from the N-terminus, the 132-residue chain is Small ribosomal subunit protein uS8 (132 aa).

The protein belongs to the universal ribosomal protein uS8 family. As to quaternary structure, part of the 30S ribosomal subunit. Contacts proteins S5 and S12.

In terms of biological role, one of the primary rRNA binding proteins, it binds directly to 16S rRNA central domain where it helps coordinate assembly of the platform of the 30S subunit. The sequence is that of Small ribosomal subunit protein uS8 from Bacillus mycoides (strain KBAB4) (Bacillus weihenstephanensis).